Here is a 283-residue protein sequence, read N- to C-terminus: Bifunctional protein FolD (283 aa).

NADP(+) contacts are provided by residues 157 to 159 (GNG) and Ile224.

The protein belongs to the tetrahydrofolate dehydrogenase/cyclohydrolase family. As to quaternary structure, homodimer.

It carries out the reaction (6R)-5,10-methylene-5,6,7,8-tetrahydrofolate + NADP(+) = (6R)-5,10-methenyltetrahydrofolate + NADPH. The catalysed reaction is (6R)-5,10-methenyltetrahydrofolate + H2O = (6R)-10-formyltetrahydrofolate + H(+). The protein operates within one-carbon metabolism; tetrahydrofolate interconversion. Catalyzes the oxidation of 5,10-methylenetetrahydrofolate to 5,10-methenyltetrahydrofolate and then the hydrolysis of 5,10-methenyltetrahydrofolate to 10-formyltetrahydrofolate. This Mycoplasmoides gallisepticum (strain R(low / passage 15 / clone 2)) (Mycoplasma gallisepticum) protein is Bifunctional protein FolD.